The primary structure comprises 2138 residues: Protein virilizer homolog (2138 aa).

Disordered regions lie at residues 1503 to 1574 (RLPQ…SMHV), 1638 to 1664 (NPTP…DDLQ), 1855 to 1881 (PVIP…SSGG), 2013 to 2035 (PMQP…QGVS), and 2058 to 2094 (YYHP…QESG). Over residues 1528–1541 (ENSSVDIPTQNSIQ) the composition is skewed to polar residues. 2 stretches are compositionally biased toward polar residues: residues 1862 to 1881 (DSLS…SSGG) and 2025 to 2035 (QISQPSEQGVS).

This sequence belongs to the vir family. In terms of assembly, interacts with MTB, FIP37 and HAKAI. Associates with MTA, MTB, FIP37 and HAKAI to form the m6A writer complex which is essential for adenosine methylation at specific mRNA sequences.

The protein localises to the nucleus speckle. The protein resides in the nucleus. Its subcellular location is the nucleoplasm. Functionally, subunit of the N6-methyltransferase complex, a multiprotein complex that mediates N6-methyladenosine (m6A) methylation at the 5'-[AG]GAC-3' consensus sites of some mRNAs. Associates with MTA, MTB, FIP37 and HAKAI to form the m6A writer complex which is essential for adenosine methylation at specific mRNA sequences. N6-methyladenosine (m6A) plays a role in mRNA stability, processing, translation efficiency and editing. In Arabidopsis thaliana (Mouse-ear cress), this protein is Protein virilizer homolog.